The chain runs to 204 residues: Phosphoribosyl-dephospho-CoA transferase (204 aa).

Catalysis depends on residues aspartate 129 and aspartate 131.

This sequence belongs to the MdcG family.

The enzyme catalyses apo-[malonate decarboxylase ACP] + 2'-(5''-triphospho-alpha-D-ribosyl)-3'-dephospho-CoA = holo-[malonate decarboxylase ACP] + diphosphate. Transfers 2'-(5-triphosphoribosyl)-3'-dephosphocoenzyme-A to the apo-[acyl-carrier-protein] of the malonate decarboxylase to yield holo-[acyl-carrier-protein]. This Pseudomonas putida (strain W619) protein is Phosphoribosyl-dephospho-CoA transferase.